Here is a 958-residue protein sequence, read N- to C-terminus: Protein translocase subunit SecA (958 aa).

ATP is bound by residues Gln87, Gly105–Thr109, and Asp524. Residues Arg598–Ser617 form a disordered region. 4 residues coordinate Zn(2+): Cys939, Cys941, Cys950, and His951.

It belongs to the SecA family. Monomer and homodimer. Part of the essential Sec protein translocation apparatus which comprises SecA, SecYEG and auxiliary proteins SecDF-YajC and YidC. The cofactor is Zn(2+).

The protein resides in the cell inner membrane. It is found in the cytoplasm. The catalysed reaction is ATP + H2O + cellular proteinSide 1 = ADP + phosphate + cellular proteinSide 2.. Its function is as follows. Part of the Sec protein translocase complex. Interacts with the SecYEG preprotein conducting channel. Has a central role in coupling the hydrolysis of ATP to the transfer of proteins into and across the cell membrane, serving both as a receptor for the preprotein-SecB complex and as an ATP-driven molecular motor driving the stepwise translocation of polypeptide chains across the membrane. This Methylobacterium sp. (strain 4-46) protein is Protein translocase subunit SecA.